We begin with the raw amino-acid sequence, 517 residues long: Ribonuclease Y (517 aa).

The helical transmembrane segment at Glu2–Ile22 threads the bilayer. Residues Thr207 to Leu267 form the KH domain. One can recognise an HD domain in the interval Val333–Ser426.

The protein belongs to the RNase Y family.

It localises to the cell membrane. Its function is as follows. Endoribonuclease that initiates mRNA decay. This is Ribonuclease Y from Petrotoga mobilis (strain DSM 10674 / SJ95).